Consider the following 317-residue polypeptide: Adenosine receptor A3 (317 aa).

At 1–14 (MPVNSTAVSLASVT) the chain is on the extracellular side. An N-linked (GlcNAc...) asparagine glycan is attached at Asn4. The chain crosses the membrane as a helical span at residues 15–37 (YISVEILIGLCAIVGNVLVIWVV). Residues 38–48 (KLNPSLQTTTF) are Cytoplasmic-facing. The helical transmembrane segment at 49–72 (YFIVSLALADIAVGVLVMPLAIVI) threads the bilayer. Residues 73-84 (SLGVTIHFYSCL) are Extracellular-facing. A disulfide bridge connects residues Cys83 and Cys165. Residues 85-106 (LMTCLLMIFTHASIMSLLAIAV) traverse the membrane as a helical segment. At 107–126 (DRYLRVKLTVRYRRVTTQRR) the chain is on the cytoplasmic side. The helical transmembrane segment at 127–148 (IWLALGLCWLVSFLVGLTPMFG) threads the bilayer. The Extracellular portion of the chain corresponds to 149–176 (WNMKLSSADKNLTFLPCQFRSVMRMDYM). The helical transmembrane segment at 177–197 (VYFSFFTWILIPLVVMCAIYF) threads the bilayer. Over 198 to 230 (DIFYVIRNRLSQNFSGSKETGAFYGREFKTAKS) the chain is Cytoplasmic. A helical membrane pass occupies residues 231–254 (LSLVLFLFALSWLPLSIINCIIYF). Residues 255-260 (NGEVPQ) are Extracellular-facing. The chain crosses the membrane as a helical span at residues 261-283 (IVLYLGILLSHANSMMNPIVYAY). The Cytoplasmic portion of the chain corresponds to 284-317 (KIKKFKETYLLILKACVICQPSKSMDPSIEQTSE). Residue Cys302 is the site of S-palmitoyl cysteine attachment.

This sequence belongs to the G-protein coupled receptor 1 family. Phosphorylation on Thr-315 and Ser-316 may be crucial for rapid desensitization. Phosphorylation on Thr-315 may be necessary for phosphorylation on Ser-316 to occur.

It localises to the cell membrane. Receptor for adenosine. The activity of this receptor is mediated by G proteins which inhibits adenylyl cyclase. The polypeptide is Adenosine receptor A3 (ADORA3) (Bos taurus (Bovine)).